Consider the following 537-residue polypeptide: Oviduct-specific glycoprotein (537 aa).

The signal sequence occupies residues 1–18 (LLLCVGLLLVLKHHDGAA). The region spanning 19 to 382 (HKLVCYFTNW…HTLNNLLVND (364 aa)) is the GH18 domain. Residues Cys23 and Cys48 are joined by a disulfide bond. Residues 68-69 (PQ), 95-98 (GGWN), Tyr139, 208-211 (LSYD), and Trp352 contribute to the chitin site. A glycan (N-linked (GlcNAc...) asparagine) is linked at Asn399. Disordered regions lie at residues 446–475 (EIAT…GEKP) and 498–537 (TGQK…ERRL). Residues 528 to 537 (GRAETLERRL) show a composition bias toward basic and acidic residues.

Belongs to the glycosyl hydrolase 18 family. In terms of tissue distribution, oviduct.

Its subcellular location is the cytoplasmic vesicle. The protein resides in the secretory vesicle. Binds to oocyte zona pellucida in vivo. May play a role in the fertilization process and/or early embryonic development. This chain is Oviduct-specific glycoprotein (OVGP1), found in Bos taurus (Bovine).